Consider the following 542-residue polypeptide: Putative cysteine ligase BshC (542 aa).

Residues 458 to 479 adopt a coiled-coil conformation; the sequence is LTKNATLLQAQIDFLHQTLQRA.

Belongs to the BshC family.

Its function is as follows. Involved in bacillithiol (BSH) biosynthesis. May catalyze the last step of the pathway, the addition of cysteine to glucosamine malate (GlcN-Mal) to generate BSH. The chain is Putative cysteine ligase BshC from Geobacillus sp. (strain WCH70).